Reading from the N-terminus, the 984-residue chain is Glutamate [NMDA] receptor subunit 1 (984 aa).

The first 24 residues, 1–24 (MAAAFAYRWLLCAAGIVNVLPIGA), serve as a signal peptide directing secretion. The Extracellular segment spans residues 25–570 (QRHTASDNPS…TLVSFLQPFS (546 aa)). Asn255, Asn311, Asn342, Asn394, Asn451, Asn478, and Asn498 each carry an N-linked (GlcNAc...) asparagine glycan. Residues 527-529 (PLT) and Arg534 each bind glycine. The helical transmembrane segment at 571 to 591 (NTLWILVMVSVHVVALVLYLL) threads the bilayer. Residues 592–648 (DRFSPFGRFKLSHSDSNEEKALNLSSAVWFAWGVLLNSGIGEGTPRSFSARVLGMVW) lie on the Cytoplasmic side of the membrane. A helical membrane pass occupies residues 649–669 (AGFAMIIVASYTANLAAFLVL). Residues 670–828 (ERPKTKLSGI…KTPNTLGLKN (159 aa)) are Extracellular-facing. Asn690 carries an N-linked (GlcNAc...) asparagine glycan. Residues Ser700 and Asp744 each coordinate glycine. Residues 829-849 (MAGVFILVGVGIAGGVGLIII) traverse the membrane as a helical segment. The Cytoplasmic segment spans residues 850–984 (EVIYKKHQVK…YTSDVSHLVV (135 aa)). A disordered region spans residues 947-984 (KSGLVPPALGLGKTRPQQNPLPPRYSPGYTSDVSHLVV). Residues 974–984 (GYTSDVSHLVV) show a composition bias toward polar residues.

It belongs to the glutamate-gated ion channel (TC 1.A.10.1) family. Forms a heteromeric NMDA channel with Nmdar2.

It localises to the cell membrane. It is found in the postsynaptic cell membrane. The protein localises to the postsynaptic density. NMDA receptor subtype of glutamate-gated ion channels with high calcium permeability and voltage-dependent sensitivity to magnesium. Mediated by glycine. This protein plays a key role in synaptic plasticity, synaptogenesis, excitotoxicity, memory acquisition and learning. It mediates neuronal functions in glutamate neurotransmission. Is involved in the cell surface targeting of NMDA receptors. Plays a role in associative learning and in long-term memory consolidation. This chain is Glutamate [NMDA] receptor subunit 1, found in Drosophila virilis (Fruit fly).